We begin with the raw amino-acid sequence, 381 residues long: Creatine kinase B-type (381 aa).

Positions 11–98 (KMKYSVDDEY…FDPVIEDRHG (88 aa)) constitute a Phosphagen kinase N-terminal domain. A creatine-binding site is contributed by V72. The Phosphagen kinase C-terminal domain occupies 125 to 367 (YVLSSRVRTG…KLLIEMEKRL (243 aa)). Residues 128 to 132 (SSRVR), R130, R132, and H191 each bind ATP. E232 is a binding site for creatine. R236 provides a ligand contact to ATP. Residue T282 is modified to Phosphothreonine; by autocatalysis. S285 contacts creatine. The residue at position 285 (S285) is a Phosphoserine; by autocatalysis. Position 289 is a phosphothreonine; by autocatalysis (T289). Residues R292, R320, 320–325 (RGTGGV), and D335 contribute to the ATP site.

It belongs to the ATP:guanido phosphotransferase family. As to quaternary structure, dimer of identical or non-identical chains, which can be either B (brain type) or M (muscle type). With MM being the major form in skeletal muscle and myocardium, MB existing in myocardium, and BB existing in many tissues, especially brain. Ba-CK and Bb-CK are phosphorylated. In terms of processing, the N-terminus of BA-CK is blocked. In terms of tissue distribution, expressed in almost all tissues and found enriched in various region of the brain, retina, heart, gizzard, gut and sperm.

It is found in the cytoplasm. It localises to the cytosol. The protein localises to the mitochondrion. The protein resides in the cell membrane. It catalyses the reaction creatine + ATP = N-phosphocreatine + ADP + H(+). In terms of biological role, reversibly catalyzes the transfer of phosphate between ATP and various phosphogens (e.g. creatine phosphate). Creatine kinase isoenzymes play a central role in energy transduction in tissues with large, fluctuating energy demands, such as skeletal muscle, heart, brain and spermatozoa. The protein is Creatine kinase B-type of Gallus gallus (Chicken).